Reading from the N-terminus, the 150-residue chain is Flagellar assembly factor FliW (150 aa).

Belongs to the FliW family. Interacts with translational regulator CsrA and flagellin(s).

Its subcellular location is the cytoplasm. In terms of biological role, acts as an anti-CsrA protein, binds CsrA and prevents it from repressing translation of its target genes, one of which is flagellin. Binds to flagellin and participates in the assembly of the flagellum. The polypeptide is Flagellar assembly factor FliW (Thermoanaerobacter pseudethanolicus (strain ATCC 33223 / 39E) (Clostridium thermohydrosulfuricum)).